Consider the following 153-residue polypeptide: NAD(P)H-quinone oxidoreductase subunit N (153 aa).

Belongs to the complex I NdhN subunit family. NDH-1 can be composed of about 15 different subunits; different subcomplexes with different compositions have been identified which probably have different functions.

It localises to the cellular thylakoid membrane. The catalysed reaction is a plastoquinone + NADH + (n+1) H(+)(in) = a plastoquinol + NAD(+) + n H(+)(out). It carries out the reaction a plastoquinone + NADPH + (n+1) H(+)(in) = a plastoquinol + NADP(+) + n H(+)(out). NDH-1 shuttles electrons from an unknown electron donor, via FMN and iron-sulfur (Fe-S) centers, to quinones in the respiratory and/or the photosynthetic chain. The immediate electron acceptor for the enzyme in this species is believed to be plastoquinone. Couples the redox reaction to proton translocation, and thus conserves the redox energy in a proton gradient. Cyanobacterial NDH-1 also plays a role in inorganic carbon-concentration. This Prochlorococcus marinus (strain MIT 9303) protein is NAD(P)H-quinone oxidoreductase subunit N.